Consider the following 512-residue polypeptide: RCC1 domain-containing protein DDB_G0279253 (512 aa).

8 RCC1 repeats span residues 1 to 56, 58 to 134, 135 to 185, 197 to 248, 249 to 319, 321 to 384, 386 to 443, and 454 to 512; these read MKIY…MIID, GDLY…ACDN, NGNI…NNNN, SGGV…ALSS, ENDV…LLDI, FKNV…LLTN, DKLY…IQVY, and NNNI…FILP. The span at 66 to 77 shows a compositional bias: polar residues; the sequence is NDSGQLGINSNE. 2 disordered regions span residues 66–85 and 162–200; these read NDSG…QQQQ and STSN…SGGV. Positions 162–196 are enriched in low complexity; sequence STSNNKNNNNNNNNNNNNNNNNNNNNNNNNNNNNN.

The polypeptide is RCC1 domain-containing protein DDB_G0279253 (Dictyostelium discoideum (Social amoeba)).